Reading from the N-terminus, the 300-residue chain is Tyrosine phosphatase-like protein J1 (300 aa).

Residues leucine 27–phenylalanine 294 form the Tyrosine-protein phosphatase domain.

The protein belongs to the protein-tyrosine phosphatase family.

The polypeptide is Tyrosine phosphatase-like protein J1 (J1) (Microplitis demolitor (Parasitoid wasp)).